Consider the following 869-residue polypeptide: Translation initiation factor IF-2 (869 aa).

Disordered regions lie at residues 51–78 (KQHGGTGSEAPKRMTLQRKTTSTLNMGK) and 105–277 (EEET…SDLK). A compositionally biased stretch (polar residues) spans 67 to 76 (QRKTTSTLNM). Positions 110 to 119 (RALAEQQAQL) are enriched in low complexity. The span at 120–241 (EAEKAAAEEA…KKQEAEEVHV (122 aa)) shows a compositional bias: basic and acidic residues. The tr-type G domain occupies 369–542 (SRAPVVTIMG…ELLDLKAPPT (174 aa)). Residues 378 to 385 (GHVDHGKT) form a G1 region. 378 to 385 (GHVDHGKT) contributes to the GTP binding site. Residues 403 to 407 (GITQH) form a G2 region. The tract at residues 424–427 (DTPG) is G3. Residues 424-428 (DTPGH) and 478-481 (NKMD) contribute to the GTP site. The tract at residues 478–481 (NKMD) is G4. Positions 514–516 (SAK) are G5.

The protein belongs to the TRAFAC class translation factor GTPase superfamily. Classic translation factor GTPase family. IF-2 subfamily.

It is found in the cytoplasm. One of the essential components for the initiation of protein synthesis. Protects formylmethionyl-tRNA from spontaneous hydrolysis and promotes its binding to the 30S ribosomal subunits. Also involved in the hydrolysis of GTP during the formation of the 70S ribosomal complex. The chain is Translation initiation factor IF-2 from Pseudoalteromonas atlantica (strain T6c / ATCC BAA-1087).